Here is a 196-residue protein sequence, read N- to C-terminus: Imidazole glycerol phosphate synthase subunit HisH (196 aa).

Residues 2-196 (KVAVVKYNAG…ERVLRNFLDL (195 aa)) form the Glutamine amidotransferase type-1 domain. C77 (nucleophile) is an active-site residue. Catalysis depends on residues H178 and E180.

As to quaternary structure, heterodimer of HisH and HisF.

The protein resides in the cytoplasm. The catalysed reaction is 5-[(5-phospho-1-deoxy-D-ribulos-1-ylimino)methylamino]-1-(5-phospho-beta-D-ribosyl)imidazole-4-carboxamide + L-glutamine = D-erythro-1-(imidazol-4-yl)glycerol 3-phosphate + 5-amino-1-(5-phospho-beta-D-ribosyl)imidazole-4-carboxamide + L-glutamate + H(+). It catalyses the reaction L-glutamine + H2O = L-glutamate + NH4(+). It participates in amino-acid biosynthesis; L-histidine biosynthesis; L-histidine from 5-phospho-alpha-D-ribose 1-diphosphate: step 5/9. Its function is as follows. IGPS catalyzes the conversion of PRFAR and glutamine to IGP, AICAR and glutamate. The HisH subunit catalyzes the hydrolysis of glutamine to glutamate and ammonia as part of the synthesis of IGP and AICAR. The resulting ammonia molecule is channeled to the active site of HisF. The sequence is that of Imidazole glycerol phosphate synthase subunit HisH from Bacteroides thetaiotaomicron (strain ATCC 29148 / DSM 2079 / JCM 5827 / CCUG 10774 / NCTC 10582 / VPI-5482 / E50).